A 146-amino-acid polypeptide reads, in one-letter code: Endothelial differentiation-related factor 1 homolog (146 aa).

The tract at residues 13 to 53 is disordered; that stretch reads RKKGSAAQSKSKQAVTAAQRKGEAVETSKKWAAGQNKQHVV. The span at 17-31 shows a compositional bias: low complexity; that stretch reads SAAQSKSKQAVTAAQ. A compositionally biased stretch (basic and acidic residues) spans 32–41; the sequence is RKGEAVETSK. One can recognise an HTH cro/C1-type domain in the interval 80–134; it reads IQQGRQNKGLTQKDLATKINEKPQIIAEYECGKAIPNNQVMGKIERAIGLKLRGK. Positions 91 to 110 form a DNA-binding region, H-T-H motif; it reads QKDLATKINEKPQIIAEYEC.

Its subcellular location is the nucleus. Its function is as follows. Probable transcriptional coactivator. This is Endothelial differentiation-related factor 1 homolog (edf1) from Danio rerio (Zebrafish).